The following is a 386-amino-acid chain: GTPase Obg (386 aa).

The region spanning 1–159 (MKFVDEASIL…RELLLELMLL (159 aa)) is the Obg domain. The tract at residues 127–147 (NTRFKSSVNRTPRQKTNGTPG) is disordered. Residues 129–145 (RFKSSVNRTPRQKTNGT) show a composition bias toward polar residues. Residues 160-333 (ADVGMLGMPN…LCWDVMTFII (174 aa)) enclose the OBG-type G domain. GTP-binding positions include 166 to 173 (GMPNAGKS), 191 to 195 (FTTLV), 213 to 216 (DIPG), 283 to 286 (NKID), and 314 to 316 (SAA). Serine 173 and threonine 193 together coordinate Mg(2+).

This sequence belongs to the TRAFAC class OBG-HflX-like GTPase superfamily. OBG GTPase family. In terms of assembly, monomer. The cofactor is Mg(2+).

The protein resides in the cytoplasm. Functionally, an essential GTPase which binds GTP, GDP and possibly (p)ppGpp with moderate affinity, with high nucleotide exchange rates and a fairly low GTP hydrolysis rate. Plays a role in control of the cell cycle, stress response, ribosome biogenesis and in those bacteria that undergo differentiation, in morphogenesis control. This chain is GTPase Obg, found in Escherichia coli (strain UTI89 / UPEC).